The sequence spans 240 residues: RNA-binding protein pno1 (240 aa).

Basic and acidic residues predominate over residues 1 to 15; sequence MEAENIRADAFEPAK. Residues 1–61 are disordered; that stretch reads MEAENIRADA…APPKAKRARS (61 aa). Residues 164–213 form the KH domain; it reads QSRAIGRLAGKGGRTKFTIENVTKTRIVLADSKIHILGSYQNIQLARRAV.

It belongs to the PNO1 family.

Its subcellular location is the nucleus. The protein localises to the nucleolus. The polypeptide is RNA-binding protein pno1 (l(1)G0004) (Drosophila melanogaster (Fruit fly)).